We begin with the raw amino-acid sequence, 219 residues long: Large ribosomal subunit protein uL3 (219 aa).

Residues 134-153 (RASHGNSRSHNVPGSIGMAQ) are disordered. Glutamine 153 is subject to N5-methylglutamine.

Belongs to the universal ribosomal protein uL3 family. In terms of assembly, part of the 50S ribosomal subunit. Forms a cluster with proteins L14 and L19. In terms of processing, methylated by PrmB.

Its function is as follows. One of the primary rRNA binding proteins, it binds directly near the 3'-end of the 23S rRNA, where it nucleates assembly of the 50S subunit. The chain is Large ribosomal subunit protein uL3 from Paraburkholderia phytofirmans (strain DSM 17436 / LMG 22146 / PsJN) (Burkholderia phytofirmans).